We begin with the raw amino-acid sequence, 183 residues long: Peptidyl-tRNA hydrolase (183 aa).

Tyr-15 serves as a coordination point for tRNA. His-20 functions as the Proton acceptor in the catalytic mechanism. Residues Tyr-67 and Asn-69 each coordinate tRNA.

This sequence belongs to the PTH family. As to quaternary structure, monomer.

It localises to the cytoplasm. The enzyme catalyses an N-acyl-L-alpha-aminoacyl-tRNA + H2O = an N-acyl-L-amino acid + a tRNA + H(+). Functionally, hydrolyzes ribosome-free peptidyl-tRNAs (with 1 or more amino acids incorporated), which drop off the ribosome during protein synthesis, or as a result of ribosome stalling. Catalyzes the release of premature peptidyl moieties from peptidyl-tRNA molecules trapped in stalled 50S ribosomal subunits, and thus maintains levels of free tRNAs and 50S ribosomes. The protein is Peptidyl-tRNA hydrolase of Chlamydia caviae (strain ATCC VR-813 / DSM 19441 / 03DC25 / GPIC) (Chlamydophila caviae).